Consider the following 449-residue polypeptide: Protein tweety homolog 1-A (449 aa).

Residues 1-43 lie on the Extracellular side of the membrane; it reads MSTSHGYRASWWTNILHQVPHTNFQFEVVDNQFAPQEWPYQQA. Residues 44–64 traverse the membrane as a helical segment; the sequence is LLFLASIAGLCLAISLILICV. The Cytoplasmic portion of the chain corresponds to 65 to 86; that stretch reads YLIRFCCCASQEDDDSKNHRVC. The helical transmembrane segment at 87-107 threads the bilayer; that stretch reads CVTWSCVAAVIICCAGIGIGF. The Extracellular segment spans residues 108–212; the sequence is YGNSETNDGV…QVNFIEDYRW (105 aa). N128 carries N-linked (GlcNAc...) asparagine glycosylation. A helical transmembrane segment spans residues 213–233; sequence LAYILLLLLDLIICLFTLLGL. Residues 234–238 lie on the Cytoplasmic side of the membrane; it reads AKRIK. A helical transmembrane segment spans residues 239-259; the sequence is WLVIVMTVVSFFVLLLSWGSM. Topologically, residues 260–388 are extracellular; it reads GLEMATAVGL…LKGLCYDGME (129 aa). 2 cysteine pairs are disulfide-bonded: C273–C383 and C301–C368. N-linked (GlcNAc...) asparagine glycosylation is found at N282 and N353. Residues 389–409 traverse the membrane as a helical segment; sequence GILFLLLFSFLSALSFTAAVC. Residues 410–449 are Cytoplasmic-facing; that stretch reads SLPRAWKRFQNRDLDYDDMDEDDPFNPQESKRFVQWQSSI.

The protein belongs to the tweety family. As to quaternary structure, homotetramer; disulfide-linked. Homodimer.

It localises to the cell membrane. The catalysed reaction is chloride(in) = chloride(out). It catalyses the reaction L-glutamate(out) = L-glutamate(in). Functionally, may act as a calcium-independent, swelling-dependent volume-regulated anion channel (VRAC-swell) which plays a pivotal role in the process of regulatory volume decrease (RVD) in the brain through the efflux of anions like chloride and organic osmolytes like glutamate. The sequence is that of Protein tweety homolog 1-A (ttyh1-a) from Xenopus laevis (African clawed frog).